The following is a 438-amino-acid chain: Ornithine aminotransferase car2 (438 aa).

Lys275 is subject to N6-(pyridoxal phosphate)lysine.

This sequence belongs to the class-III pyridoxal-phosphate-dependent aminotransferase family. The cofactor is pyridoxal 5'-phosphate.

Its subcellular location is the cytoplasm. It is found in the nucleus. The catalysed reaction is a 2-oxocarboxylate + L-ornithine = L-glutamate 5-semialdehyde + an L-alpha-amino acid. Its pathway is amino-acid biosynthesis; L-proline biosynthesis; L-glutamate 5-semialdehyde from L-ornithine: step 1/1. This is Ornithine aminotransferase car2 (car2) from Schizosaccharomyces pombe (strain 972 / ATCC 24843) (Fission yeast).